The sequence spans 277 residues: MPELPEVETIVRSLEKHLSGLVITSVDLFKPEVIRTPRVDIFTDQIVGRQFQKKLGRRGKYLLLHMSDGLTLVIHLRMTGRLIYCDADLPLEKHTHVIFHLDNGKQLRFADVRRFGRMSLVPTREVPHLPGIKEMGPEPLDTAFSREYLKKELRRRRTRIKSLLLDQCFVAGLGNIYADEALHEAKIHPERLAPDLTSREASGLHKAIIEVISSGIKHRGTTFRDYVDGEGRSGSYQHQLKVYNREGLPCPHCGKPIQRIKVAGRSSYYCSSCQKAK.

Proline 2 acts as the Schiff-base intermediate with DNA in catalysis. Residue glutamate 3 is the Proton donor of the active site. Lysine 60 acts as the Proton donor; for beta-elimination activity in catalysis. Positions 94, 113, and 156 each coordinate DNA. The FPG-type zinc-finger motif lies at 241-275 (KVYNREGLPCPHCGKPIQRIKVAGRSSYYCSSCQK). The active-site Proton donor; for delta-elimination activity is arginine 265.

This sequence belongs to the FPG family. Monomer. Zn(2+) serves as cofactor.

It catalyses the reaction Hydrolysis of DNA containing ring-opened 7-methylguanine residues, releasing 2,6-diamino-4-hydroxy-5-(N-methyl)formamidopyrimidine.. It carries out the reaction 2'-deoxyribonucleotide-(2'-deoxyribose 5'-phosphate)-2'-deoxyribonucleotide-DNA = a 3'-end 2'-deoxyribonucleotide-(2,3-dehydro-2,3-deoxyribose 5'-phosphate)-DNA + a 5'-end 5'-phospho-2'-deoxyribonucleoside-DNA + H(+). Its function is as follows. Involved in base excision repair of DNA damaged by oxidation or by mutagenic agents. Acts as a DNA glycosylase that recognizes and removes damaged bases. Has a preference for oxidized purines, such as 7,8-dihydro-8-oxoguanine (8-oxoG). Has AP (apurinic/apyrimidinic) lyase activity and introduces nicks in the DNA strand. Cleaves the DNA backbone by beta-delta elimination to generate a single-strand break at the site of the removed base with both 3'- and 5'-phosphates. The sequence is that of Formamidopyrimidine-DNA glycosylase from Desulforamulus reducens (strain ATCC BAA-1160 / DSM 100696 / MI-1) (Desulfotomaculum reducens).